A 292-amino-acid chain; its full sequence is Ribosomal protein L11 methyltransferase (292 aa).

Positions 136, 159, 181, and 228 each coordinate S-adenosyl-L-methionine.

It belongs to the methyltransferase superfamily. PrmA family.

Its subcellular location is the cytoplasm. It carries out the reaction L-lysyl-[protein] + 3 S-adenosyl-L-methionine = N(6),N(6),N(6)-trimethyl-L-lysyl-[protein] + 3 S-adenosyl-L-homocysteine + 3 H(+). Functionally, methylates ribosomal protein L11. In Rhizobium rhizogenes (strain K84 / ATCC BAA-868) (Agrobacterium radiobacter), this protein is Ribosomal protein L11 methyltransferase.